Consider the following 490-residue polypeptide: Cell division cycle protein cdt2 (490 aa).

Positions 18-40 are disordered; the sequence is ITSRANNSLPPTPDSSPAAPSKK. WD repeat units follow at residues 178–208, 226–257, 285–317, 339–369, 387–419, and 435–464; these read AHNN…KVFD, YHSH…IFWD, GRDC…KLWD, KRDF…YEYS, RISS…GVVV, and GHTK…RVWN.

It belongs to the WD repeat cdt2 family. As to quaternary structure, component of the DCX(DTL) E3 ubiquitin ligase complex, at least composed of cul4, ddb1, cdt2 and pip1.

It is found in the nucleus. It functions in the pathway protein modification; protein ubiquitination. Functionally, substrate-specific adapter of a DCX (DDB1-CUL4-X-box) E3 ubiquitin-protein ligase complex required for DNA replication during mitosis and meiosis. The DCX(DTL) complex, also named CRL4(CDT2) complex, mediates the polyubiquitination and subsequent degradation of cdt1 and spd1. Involved in the regulation of mitotic and pre-meiotic S-phase progression. In Schizosaccharomyces pombe (strain 972 / ATCC 24843) (Fission yeast), this protein is Cell division cycle protein cdt2 (cdt2).